The primary structure comprises 1332 residues: MGDPAPARSLDDIDLSALRDPAGIFELVEVVGNGTYGQVYKGRHVKTGQLAAIKVMDVTEDEEEEIKQEINMLKKYSHHRNIATYYGAFIKKSPPGNDDQLWLVMEFCGAGSVTDLVKNTKGNALKEDCIAYICREILRGLAHLHAHKVIHRDIKGQNVLLTENAEVKLVDFGVSAQLDRTVGRRNTFIGTPYWMAPEVIACDENPDATYDYRSDIWSLGITAIEMAEGAPPLCDMHPMRALFLIPRNPPPRLKSKKWSKKFIDFIDTCLIKTYLSRPPTEQLLKFPFIRDQPTERQVRIQLKDHIDRSRKKRGEKEETEYEYSGSEEEDDSHGEEGEPSSIMNVPGESTLRREFLRLQQENKSNSEALKQQQQLQQQQQRDPEAHIKHLLHQRQRRIEEQKEERRRVEEQQRREREQRKLQEKEQQRRLEDMQALRREEERRQAEREQEYKRKQLEEQRQSERLQRQLQQEHAYLKSLQQQQQQQQLQKQQQQQLLPGDRKPLYHYGRGMNPADKPAWAREVEERTRMNKQQNSPLAKSKPGSTGPEPPIPQASPGPPGPLSQTPPMQRPVEPQEGPHKSLVAHRVPLKPYAAPVPRSQSLQDQPTRNLAAFPASHDPDPAIPAPTATPSARGAVIRQNSDPTSEGPGPSPNPPAWVRPDNEAPPKVPQRTSSIATALNTSGAGGSRPAQAVRARPRSNSAWQIYLQRRAERGTPKPPGPPAQPPGPPNASSNPDLRRSDPGWERSDSVLPASHGHLPQAGSLERNRVGVSSKPDSSPVLSPGNKAKPDDHRSRPGRPADFVLLKERTLDEAPRPPKKAMDYSSSSEEVESSEDDEEEGEGGPAEGSRDTPGGRSDGDTDSVSTMVVHDVEEITGTQPPYGGGTMVVQRTPEEERNLLHADSNGYTNLPDVVQPSHSPTENSKGQSPPSKDGSGDYQSRGLVKAPGKSSFTMFVDLGIYQPGGSGDSIPITALVGGEGTRLDQLQYDVRKGSVVNVNPTNTRAHSETPEIRKYKKRFNSEILCAALWGVNLLVGTENGLMLLDRSGQGKVYGLIGRRRFQQMDVLEGLNLLITISGKRNKLRVYYLSWLRNKILHNDPEVEKKQGWTTVGDMEGCGHYRVVKYERIKFLVIALKSSVEVYAWAPKPYHKFMAFKSFADLPHRPLLVDLTVEEGQRLKVIYGSSAGFHAVDVDSGNSYDIYIPVHIQSQITPHAIIFLPNTDGMEMLLCYEDEGVYVNTYGRIIKDVVLQWGEMPTSVAYICSNQIMGWGEKAIEIRSVETGHLDGVFMHKRAQRLKFLCERNDKVFFASVRSGGSSQVYFMTLNRNCIMNW.

The Protein kinase domain occupies 25 to 289 (FELVEVVGNG…TEQLLKFPFI (265 aa)). ATP-binding positions include 31-39 (VGNGTYGQV) and K54. Catalysis depends on D153, which acts as the Proton acceptor. Disordered stretches follow at residues 300–347 (IQLK…NVPG), 363–383 (KSNS…QRDP), and 395–887 (QRRI…GTMV). The span at 317–333 (EETEYEYSGSEEEDDSH) shows a compositional bias: acidic residues. S324 and S326 each carry phosphoserine. A compositionally biased stretch (low complexity) spans 371–380 (QQQQLQQQQQ). The span at 396 to 466 (RRIEEQKEER…EEQRQSERLQ (71 aa)) shows a compositional bias: basic and acidic residues. Residues 479–497 (LQQQQQQQQLQKQQQQQLL) are compositionally biased toward low complexity. An omega-N-methylarginine mark is found at R501 and R509. Over residues 518–528 (AWAREVEERTR) the composition is skewed to basic and acidic residues. The segment covering 547–561 (PEPPIPQASPGPPGP) has biased composition (pro residues). Positions 598–608 (RSQSLQDQPTR) are enriched in polar residues. Phosphoserine is present on S641. Over residues 670–682 (QRTSSIATALNTS) the composition is skewed to polar residues. At S701 the chain carries Phosphoserine. The span at 716–729 (PKPPGPPAQPPGPP) shows a compositional bias: pro residues. The segment covering 736 to 748 (DLRRSDPGWERSD) has biased composition (basic and acidic residues). S754, S763, S777, S778, and S782 each carry phosphoserine. Residues 804 to 821 (LLKERTLDEAPRPPKKAM) show a composition bias toward basic and acidic residues. The segment covering 828-841 (EEVESSEDDEEEGE) has biased composition (acidic residues). The tract at residues 866-1332 (MVVHDVEEIT…TLNRNCIMNW (467 aa)) is mediates interaction with RAP2A. T891 carries the phosphothreonine modification. A disordered region spans residues 902–943 (DSNGYTNLPDVVQPSHSPTENSKGQSPPSKDGSGDYQSRGLV). Residues 915–929 (PSHSPTENSKGQSPP) are compositionally biased toward polar residues. The CNH domain maps to 1019 to 1306 (NSEILCAALW…KFLCERNDKV (288 aa)).

This sequence belongs to the protein kinase superfamily. STE Ser/Thr protein kinase family. STE20 subfamily. As to quaternary structure, interacts with TANC1. Interacts with RAP2A. Isoform 4 interacts with NCK1. Requires Mg(2+) as cofactor. Autophosphorylated. As to expression, expressed in the brain, isoform 2 is more abundant than isoform 1. Isoform 3 is ubiquitously expressed. Isoform 1 is most abundant in the skeletal muscle. Isoform 4 is ubiquitously expressed with relative high levels in brain, skeletal muscle, pancreas and testis.

It localises to the cytoplasm. It is found in the postsynaptic density. The protein localises to the cell projection. Its subcellular location is the axon. The protein resides in the dendrite. It localises to the golgi apparatus. The enzyme catalyses L-seryl-[protein] + ATP = O-phospho-L-seryl-[protein] + ADP + H(+). It carries out the reaction L-threonyl-[protein] + ATP = O-phospho-L-threonyl-[protein] + ADP + H(+). Functionally, serine/threonine kinase which acts as a negative regulator of Ras-related Rap2-mediated signal transduction to control neuronal structure and AMPA receptor trafficking. Required for normal synaptic density, dendrite complexity, as well as surface AMPA receptor expression in hippocampal neurons. Can activate the JNK and MAPK14/p38 pathways and mediates stimulation of the stress-activated protein kinase MAPK14/p38 MAPK downstream of the Raf/ERK pathway. Phosphorylates TANC1 upon stimulation by RAP2A, MBP and SMAD1. Has an essential function in negative selection of thymocytes, perhaps by coupling NCK1 to activation of JNK1. Activator of the Hippo signaling pathway which plays a pivotal role in organ size control and tumor suppression by restricting proliferation and promoting apoptosis. MAP4Ks act in parallel to and are partially redundant with STK3/MST2 and STK4/MST2 in the phosphorylation and activation of LATS1/2, and establish MAP4Ks as components of the expanded Hippo pathway. Its function is as follows. Isoform 4 can activate the JNK pathway. Involved in the regulation of actin cytoskeleton reorganization, cell-matrix adhesion, cell-cell adhesion and cell migration. The protein is Misshapen-like kinase 1 of Homo sapiens (Human).